Here is a 373-residue protein sequence, read N- to C-terminus: Inhibitor of nuclear factor kappa-B kinase-interacting protein (373 aa).

Residues 1–11 are compositionally biased toward basic residues; that stretch reads MSEVKSRKKPG. Positions 1–38 are disordered; sequence MSEVKSRKKPGPKVAAPEPEKRSDGRKNPEARGGAGWA. Over residues 18 to 30 the composition is skewed to basic and acidic residues; that stretch reads EPEKRSDGRKNPE. Residues 43–59 form a helical membrane-spanning segment; that stretch reads GLSLLSLATSLGLAWLV. Coiled-coil stretches lie at residues 64–257 and 290–325; these read EKFA…DKLS and TERKMEELTVQMFNMEDDMLKAVSEIMEMQNTLEGI. Asparagine 151 carries an N-linked (GlcNAc...) asparagine glycan.

In terms of processing, N-glycosylated at Asn-151.

It is found in the endoplasmic reticulum membrane. Its function is as follows. Target of p53/TP53 with pro-apoptotic function. This Rattus norvegicus (Rat) protein is Inhibitor of nuclear factor kappa-B kinase-interacting protein (Ikbip).